The primary structure comprises 392 residues: Odorant receptor 85f (392 aa).

Topologically, residues 1-36 (MEPVQYSYEDFARLPTTVFWIMGYDMLGVPKTRSRR) are cytoplasmic. Residues 37 to 57 (ILYWIYRFLCLASHGVCVGVM) form a helical membrane-spanning segment. Topologically, residues 58–69 (VFRMVEAKTIDN) are extracellular. Residue Asn69 is glycosylated (N-linked (GlcNAc...) asparagine). The chain crosses the membrane as a helical span at residues 70–90 (VSLIMRYATLVTYIINSDTKF). At 91-130 (ATVLQRSAIQSLNSKLAELYPKTTLDRIYHRVNDHYWTKS) the chain is on the cytoplasmic side. The helical transmembrane segment at 131–151 (FVYLVIIYIGSSIMVVIGPII) threads the bilayer. The Extracellular segment spans residues 152-179 (TSIIAYFTHNVFTYMHCYPYFLYDPEKD). A helical transmembrane segment spans residues 180–200 (PVWIYISIYALEWLHSTQMVI). Over 201–268 (SNIGADIWLL…NDLNGIFGKS (68 aa)) the chain is Cytoplasmic. The chain crosses the membrane as a helical span at residues 269-289 (LLLSLLTTAAVICTVAVYTLI). At 290–295 (QGPTLE) the chain is on the extracellular side. The helical transmembrane segment at 296–316 (GFTYVIFIGTSVMQVYLVCYY) threads the bilayer. Over 317-363 (GQQVLDLSGEVAHAVYNHDFHDASIAYKRYLLIIIIRAQQPVELNAM) the chain is Cytoplasmic. Residues 364-384 (GYLSISLDTFKQLMSVSYRVI) traverse the membrane as a helical segment. Residues 385-392 (TMLMQMIQ) are Extracellular-facing.

It belongs to the insect chemoreceptor superfamily. Heteromeric odorant receptor channel (TC 1.A.69) family. Or49a subfamily. As to quaternary structure, interacts with Orco. Complexes exist early in the endomembrane system in olfactory sensory neurons (OSNs), coupling these complexes to the conserved ciliary trafficking pathway. Expressed in olfactory sensory neurons in the antenna.

The protein resides in the cell membrane. Odorant receptor which mediates acceptance or avoidance behavior, depending on its substrates. The odorant receptor repertoire encodes a large collection of odor stimuli that vary widely in identity, intensity, and duration. May form a complex with Orco to form odorant-sensing units, providing sensitive and prolonged odorant signaling and calcium permeability. This is Odorant receptor 85f (Or85f) from Drosophila melanogaster (Fruit fly).